A 255-amino-acid polypeptide reads, in one-letter code: Coniferyl-alcohol dehydrogenase (255 aa).

Residues 12-17 (GVSSGI), D36, 51-52 (DL), and G77 each bind NAD(+). S117 lines the substrate pocket. Y157 and K161 together coordinate NAD(+). Residue Y157 is the Proton acceptor of the active site.

Belongs to the short-chain dehydrogenases/reductases (SDR) family.

The catalysed reaction is (E)-coniferol + NADP(+) = (E)-coniferaldehyde + NADPH + H(+). Its function is as follows. Catalyzes the conversion of coniferyl alcohol into coniferyl aldehyde in the eugenol degradation pathway. Specific for coniferyl alcohol; does not act on cinnamyl alcohol, 4-coumaryl alcohol or sinapyl alcohol. The polypeptide is Coniferyl-alcohol dehydrogenase (calA) (Pseudomonas sp. (strain HR199 / DSM 7063)).